A 212-amino-acid polypeptide reads, in one-letter code: Pyrrolidone-carboxylate peptidase (212 aa).

Active-site residues include Glu-78, Cys-141, and His-165.

Belongs to the peptidase C15 family. Homotetramer.

It is found in the cytoplasm. It carries out the reaction Release of an N-terminal pyroglutamyl group from a polypeptide, the second amino acid generally not being Pro.. Functionally, removes 5-oxoproline from various penultimate amino acid residues except L-proline. The chain is Pyrrolidone-carboxylate peptidase from Staphylococcus aureus (strain NCTC 8325 / PS 47).